The following is a 312-amino-acid chain: Ornithine carbamoyltransferase (312 aa).

Residues 57-60, glutamine 84, arginine 108, and 135-138 contribute to the carbamoyl phosphate site; these read STRT and HPCQ. Residues asparagine 166, aspartate 226, and 230–231 contribute to the L-ornithine site; that span reads SM. Carbamoyl phosphate contacts are provided by residues 265-266 and arginine 293; that span reads CL.

The protein belongs to the aspartate/ornithine carbamoyltransferase superfamily. OTCase family.

The protein localises to the cytoplasm. It catalyses the reaction carbamoyl phosphate + L-ornithine = L-citrulline + phosphate + H(+). It functions in the pathway amino-acid degradation; L-arginine degradation via ADI pathway; carbamoyl phosphate from L-arginine: step 2/2. Functionally, reversibly catalyzes the transfer of the carbamoyl group from carbamoyl phosphate (CP) to the N(epsilon) atom of ornithine (ORN) to produce L-citrulline. This is Ornithine carbamoyltransferase from Brucella abortus (strain 2308).